The chain runs to 434 residues: Fc receptor-like protein 6 (434 aa).

The signal sequence occupies residues 1 to 19 (MLLWTAVLLFVPCVGKTVW). Ig-like C2-type domains lie at 20–95 (LYLQ…QTFT), 111–197 (PPVL…PQLE), and 207–293 (PVLT…KKLS). Topologically, residues 20-307 (LYLQAWPNPV…QVLFTPASNW (288 aa)) are extracellular. Disulfide bonds link cysteine 39–cysteine 83, cysteine 132–cysteine 180, and cysteine 228–cysteine 276. N-linked (GlcNAc...) asparagine glycosylation occurs at asparagine 65. A glycan (N-linked (GlcNAc...) asparagine) is linked at asparagine 273. Residues 308–328 (LVPWLPASLLGLMVIAAALLV) form a helical membrane-spanning segment. At 329–434 (YVRSWRKAGP…PLSDCEEVLC (106 aa)) the chain is on the cytoplasmic side. Positions 369 to 374 (VVYSVV) match the ITIM motif motif. A Phosphotyrosine modification is found at tyrosine 371.

In terms of assembly, interacts (tyrosine phosphorylated) with PTPN11. Interacts (tyrosine phosphorylated) with PTPN6, INPP5D, INPPL1 and GRB2. Interacts with class II MHC HLA-DR when the alpha chain is associated with a beta-1, beta-4 or a beta-5 but not a beta-3 chain. Post-translationally, phosphorylated on Tyr residues. Tyrosine phosphorylation induces association with phosphatase PTPN11, PTPN6, INPP5D, INPPL1 and GRB2. Expressed by cytolytic cells including NK cells, effector and effector-memory CD8(+) T-cells, and a subset of NKT cells (at protein level). Also expressed in gamma delta T cells and in a rare subset of effector CD4(+) T-cells (at protein level). Expressed in spleen, skin, peripheral blood leukocytes, liver, lung, bone marrow, small intestine and placenta. Expression among T-cells is greatly expanded in HIV-1 infected individuals, and includes not only effector and effector-memory CD8(+) T-cells but also populations of CD4(+) T-cells. Expression among CD8(+) T-cells and NK cells is expanded in individuals with chronic lymphocytic leukemia (CLL) but is reduced in PBMCs from patients with acute (AML), chronic myeloid leukemia (CML) and non-Hodgkin's lymphoma. Expression is higher in PBMCs and/or CD3(+) cells of patients with autoimmune diseases, such as rheumatoid arthritis (RA), systemic lupus erythematosus (SLE) and idiopathic thrombocytopenia purpura (ITP). In contrast, expression in CD3(+) cells from patients with lupus anticoagulans (LA) is higher.

The protein resides in the cell membrane. Functionally, acts as a MHC class II receptor. When stimulated on its own, does not play a role in cytokine production or the release of cytotoxic granules by NK cells and cytotoxic CD8(+) T cells. Does not act as an Fc receptor. This Homo sapiens (Human) protein is Fc receptor-like protein 6 (FCRL6).